Here is a 69-residue protein sequence, read N- to C-terminus: Large ribosomal subunit protein uL29 (69 aa).

The protein belongs to the universal ribosomal protein uL29 family.

This is Large ribosomal subunit protein uL29 from Rhodopseudomonas palustris (strain TIE-1).